The primary structure comprises 494 residues: Fumarate hydratase, mitochondrial (494 aa).

A mitochondrion-targeting transit peptide spans 1 to 15 (MLRASATRFLSQAKN). Residues 128–130 (SGT), 159–162 (HPND), 169–171 (SSN), and T217 each bind substrate. H218 (proton donor/acceptor) is an active-site residue. S348 is an active-site residue. Substrate is bound by residues S349 and 354–356 (KVN).

The protein belongs to the class-II fumarase/aspartase family. Fumarase subfamily. In terms of assembly, homotetramer.

It is found in the mitochondrion matrix. The protein localises to the cytoplasm. It localises to the nucleus. The enzyme catalyses (S)-malate = fumarate + H2O. It participates in carbohydrate metabolism; tricarboxylic acid cycle; (S)-malate from fumarate: step 1/1. Its function is as follows. Catalyzes the reversible stereospecific interconversion of fumarate to L-malate. In mitochondrion, catalyzes the hydration of fumarate to L-malate in the tricarboxylic acid (TCA) cycle to facilitate a transition step in the production of energy in the form of NADH. In cytoplasm and nucleus, involved in DNA repair in response to DNA damage: following DNA double-strand breaks (DSBs), translocates from the cytosol to the nucleus and promotes DNA repair by catalyzing the dehydration of L-malate to fumarate. The sequence is that of Fumarate hydratase, mitochondrial from Rhizopus oryzae (Mucormycosis agent).